Consider the following 299-residue polypeptide: ATP phosphoribosyltransferase (299 aa).

It belongs to the ATP phosphoribosyltransferase family. Long subfamily. Equilibrium between an active dimeric form, an inactive hexameric form and higher aggregates. Interconversion between the various forms is largely reversible and is influenced by the natural substrates and inhibitors of the enzyme. Requires Mg(2+) as cofactor.

It localises to the cytoplasm. The enzyme catalyses 1-(5-phospho-beta-D-ribosyl)-ATP + diphosphate = 5-phospho-alpha-D-ribose 1-diphosphate + ATP. Its pathway is amino-acid biosynthesis; L-histidine biosynthesis; L-histidine from 5-phospho-alpha-D-ribose 1-diphosphate: step 1/9. With respect to regulation, feedback inhibited by histidine. In terms of biological role, catalyzes the condensation of ATP and 5-phosphoribose 1-diphosphate to form N'-(5'-phosphoribosyl)-ATP (PR-ATP). Has a crucial role in the pathway because the rate of histidine biosynthesis seems to be controlled primarily by regulation of HisG enzymatic activity. The chain is ATP phosphoribosyltransferase from Serratia proteamaculans (strain 568).